The primary structure comprises 1052 residues: Kinesin-like protein KIF11 (1052 aa).

Positions 17-358 (NIQVVVRCRP…LEYAHRAKNI (342 aa)) constitute a Kinesin motor domain. ATP is bound at residue 104–111 (GQTGTGKT). An N6-acetyllysine modification is found at K145. Positions 364–478 (VNQKLTKKAL…ETKLQLVKEE (115 aa)) form a coiled coil. Position 457 is a phosphothreonine (T457). A Glycyl lysine isopeptide (Lys-Gly) (interchain with G-Cter in SUMO2) cross-link involves residue K476. T925 carries the phosphothreonine modification. Disordered stretches follow at residues 950–1026 (LQKK…LNPV) and 1033–1052 (EASDLSISKSRLPLHTSINL). Residues 963–988 (EASKETSQDMDEEREALEQCTEELVS) are a coiled coil. Residues 1016–1026 (KDKENRGLNPV) show a composition bias toward basic and acidic residues.

The protein belongs to the TRAFAC class myosin-kinesin ATPase superfamily. Kinesin family. BimC subfamily. Interacts with the thyroid hormone receptor in the presence of thyroid hormone. Component of a large chromatin remodeling complex, at least composed of MYSM1, PCAF, RBM10 and KIF11/TRIP5. Interacts with RARRES1 and AGBL2. Post-translationally, phosphorylated exclusively on serine during S phase, but on both serine and Thr-925 during mitosis, so controlling the association of KIF11 with the spindle apparatus (probably during early prophase).

The protein localises to the cytoplasm. The protein resides in the cytoskeleton. It localises to the spindle pole. In terms of biological role, motor protein required for establishing a bipolar spindle during mitosis. Required in non-mitotic cells for transport of secretory proteins from the Golgi complex to the cell surface. This chain is Kinesin-like protein KIF11 (Kif11), found in Mus musculus (Mouse).